A 297-amino-acid polypeptide reads, in one-letter code: Tyrosine recombinase XerC (297 aa).

Residues Met1–Met84 form the Core-binding (CB) domain. The region spanning Tyr105–Leu286 is the Tyr recombinase domain. Catalysis depends on residues Arg145, Lys169, His238, Arg241, and His264. Residue Tyr273 is the O-(3'-phospho-DNA)-tyrosine intermediate of the active site.

This sequence belongs to the 'phage' integrase family. XerC subfamily. As to quaternary structure, forms a cyclic heterotetrameric complex composed of two molecules of XerC and two molecules of XerD.

The protein localises to the cytoplasm. In terms of biological role, site-specific tyrosine recombinase, which acts by catalyzing the cutting and rejoining of the recombining DNA molecules. The XerC-XerD complex is essential to convert dimers of the bacterial chromosome into monomers to permit their segregation at cell division. It also contributes to the segregational stability of plasmids. The sequence is that of Tyrosine recombinase XerC from Staphylococcus haemolyticus (strain JCSC1435).